Reading from the N-terminus, the 227-residue chain is Phage shock protein A homolog (227 aa).

Positions 33–125 (LRNMNSDLAK…AQMRKMHDKL (93 aa)) form a coiled coil. Positions 191 to 211 (SAPQDDMADLSAKYDTGGSSQ) are disordered.

This sequence belongs to the PspA/Vipp/IM30 family.

This is Phage shock protein A homolog (ydjF) from Bacillus subtilis (strain 168).